Reading from the N-terminus, the 283-residue chain is 1-deoxypentalenic acid 11-beta-hydroxylase (283 aa).

Substrate is bound at residue arginine 117. Positions 135 and 137 each coordinate Fe cation. 2-oxoglutarate-binding positions include histidine 135–aspartate 137 and tryptophan 151. Substrate is bound at residue arginine 186. Histidine 224 is a Fe cation binding site. Residues serine 226 and arginine 238 each coordinate 2-oxoglutarate. The disordered stretch occupies residues tryptophan 260–glutamate 283.

The protein belongs to the PhyH family. It depends on Fe cation as a cofactor. L-ascorbate serves as cofactor.

The enzyme catalyses 1-deoxypentalenate + 2-oxoglutarate + O2 = 1-deoxy-11beta-hydroxypentalenate + succinate + CO2. It functions in the pathway antibiotic biosynthesis; pentalenolactone biosynthesis. Its function is as follows. Catalyzes the conversion of 1-deoxypentalenic acid to 11-beta-hydroxy-1-deoxypentalenic acid in the biosynthesis of pentalenolactone antibiotic. The polypeptide is 1-deoxypentalenic acid 11-beta-hydroxylase (penH) (Streptomyces exfoliatus (Streptomyces hydrogenans)).